The following is a 186-amino-acid chain: MPSFTQPHSAPRNFQFPGQQRQGDPTMGTINAELADKGFLVTSTDELITWARTGSLMWMTFGLACCAIEMMQMSMPRYDIERFGVAPRASPRQSDLMIVAGTLCNKMAPALRKVYDQMPEPRYVISMGSCANGGGYYHYSYSVVRGCDRVVPVDIYVPGCPPTAEALLYGILLLQRKIRRNGSIER.

The disordered stretch occupies residues 1–27; that stretch reads MPSFTQPHSAPRNFQFPGQQRQGDPTM. [4Fe-4S] cluster-binding residues include Cys65, Cys66, Cys130, and Cys160.

The protein belongs to the complex I 20 kDa subunit family. In terms of assembly, NDH-1 is composed of 14 different subunits. Subunits NuoB, C, D, E, F, and G constitute the peripheral sector of the complex. The cofactor is [4Fe-4S] cluster.

It localises to the cell inner membrane. It catalyses the reaction a quinone + NADH + 5 H(+)(in) = a quinol + NAD(+) + 4 H(+)(out). Its function is as follows. NDH-1 shuttles electrons from NADH, via FMN and iron-sulfur (Fe-S) centers, to quinones in the respiratory chain. The immediate electron acceptor for the enzyme in this species is believed to be ubiquinone. Couples the redox reaction to proton translocation (for every two electrons transferred, four hydrogen ions are translocated across the cytoplasmic membrane), and thus conserves the redox energy in a proton gradient. The chain is NADH-quinone oxidoreductase subunit B 2 from Rhizobium etli (strain ATCC 51251 / DSM 11541 / JCM 21823 / NBRC 15573 / CFN 42).